A 192-amino-acid chain; its full sequence is Ion-translocating oxidoreductase complex subunit B (192 aa).

The interval 1 to 26 (MEMIVIAVVALTLLALLFGMLLGYAS) is hydrophobic. The 4Fe-4S domain maps to 32–91 (EEDPVVDQVDELLPQSQCGQCGYPGCRPYAEAVANNGEQINRCVPGGEPVMQKIATLLNV). Positions 49, 52, 57, 74, 117, 120, 123, 127, 147, 150, 153, and 157 each coordinate [4Fe-4S] cluster. 2 consecutive 4Fe-4S ferredoxin-type domains span residues 108–137 (MLAV…GATR) and 138–167 (AMHT…LRPA).

The protein belongs to the 4Fe4S bacterial-type ferredoxin family. RnfB subfamily. The complex is composed of six subunits: RnfA, RnfB, RnfC, RnfD, RnfE and RnfG. Requires [4Fe-4S] cluster as cofactor.

It localises to the cell inner membrane. Its function is as follows. Part of a membrane-bound complex that couples electron transfer with translocation of ions across the membrane. In Cronobacter sakazakii (strain ATCC BAA-894) (Enterobacter sakazakii), this protein is Ion-translocating oxidoreductase complex subunit B.